We begin with the raw amino-acid sequence, 378 residues long: Cytochrome b (378 aa).

The next 4 helical transmembrane spans lie at 34 to 54 (FGSL…FLSM), 78 to 100 (WLLR…CHIG), 113 to 133 (TWNV…VGYV), and 179 to 199 (FFSF…VHLL). Heme b contacts are provided by histidine 84 and histidine 98. Positions 183 and 197 each coordinate heme b. A ubiquinone is bound at residue histidine 202. The next 4 helical transmembrane spans lie at 225 to 245 (YSTK…IVVL), 289 to 306 (LGGV…FCLP), 313 to 342 (KFRS…WIGM), and 350 to 369 (IFIG…LNPL).

This sequence belongs to the cytochrome b family. In terms of assembly, the main subunits of complex b-c1 are: cytochrome b, cytochrome c1 and the Rieske protein. It depends on heme b as a cofactor.

The protein localises to the mitochondrion inner membrane. Its function is as follows. Component of the ubiquinol-cytochrome c reductase complex (complex III or cytochrome b-c1 complex) that is part of the mitochondrial respiratory chain. The b-c1 complex mediates electron transfer from ubiquinol to cytochrome c. Contributes to the generation of a proton gradient across the mitochondrial membrane that is then used for ATP synthesis. The protein is Cytochrome b (mt:Cyt-b) of Loxocorone allax (Goblet worm).